Here is a 154-residue protein sequence, read N- to C-terminus: Toxin YhaV (154 aa).

In terms of assembly, homohexamer; forms a complex with PrlF (SohA) with stoichiometry PrlF(2)-YhaV(4), possibly as a YhaV(2)-PrlF(2)-YhaV(2) complex like the MazFE complex. May dimerize in solution.

In terms of biological role, toxic component of a type II toxin-antitoxin (TA) system. Has RNase activity in vitro. Acts as a transcription factor. The YhaV/PrlF complex binds the prlF-yhaV operon, probably negatively regulating its expression. The polypeptide is Toxin YhaV (yhaV) (Escherichia coli O157:H7).